The following is a 181-amino-acid chain: Oligoribonuclease (181 aa).

Positions 8 to 171 (LVWIDMEMTG…DDIRESIAEL (164 aa)) constitute an Exonuclease domain. Residue Y129 is part of the active site.

Belongs to the oligoribonuclease family.

The protein resides in the cytoplasm. Its function is as follows. 3'-to-5' exoribonuclease specific for small oligoribonucleotides. This is Oligoribonuclease from Aeromonas hydrophila subsp. hydrophila (strain ATCC 7966 / DSM 30187 / BCRC 13018 / CCUG 14551 / JCM 1027 / KCTC 2358 / NCIMB 9240 / NCTC 8049).